The sequence spans 47 residues: Large ribosomal subunit protein bL33 (47 aa).

Belongs to the bacterial ribosomal protein bL33 family.

This is Large ribosomal subunit protein bL33 from Staphylococcus xylosus.